The following is a 524-amino-acid chain: Glutamyl-tRNA(Gln) amidotransferase subunit A, mitochondrial (524 aa).

Lys76 (charge relay system) is an active-site residue. The interval 146–168 (KQYRGKGSPDSSQEDQEPQWLVA) is disordered. Ser171 acts as the Charge relay system in catalysis. The active-site Acyl-ester intermediate is the Ser195.

It belongs to the amidase family. GatA subfamily. Subunit of the heterotrimeric GatCAB amidotransferase (AdT) complex, composed of A (QRSL1), B (GATB) and C (GATC) subunits.

Its subcellular location is the mitochondrion. It catalyses the reaction L-glutamyl-tRNA(Gln) + L-glutamine + ATP + H2O = L-glutaminyl-tRNA(Gln) + L-glutamate + ADP + phosphate + H(+). Functionally, allows the formation of correctly charged Gln-tRNA(Gln) through the transamidation of misacylated Glu-tRNA(Gln) in the mitochondria. The reaction takes place in the presence of glutamine and ATP through an activated gamma-phospho-Glu-tRNA(Gln). The sequence is that of Glutamyl-tRNA(Gln) amidotransferase subunit A, mitochondrial from Ornithorhynchus anatinus (Duckbill platypus).